Reading from the N-terminus, the 320-residue chain is L-lactate dehydrogenase (320 aa).

Residues Val-18, Asp-39, Arg-44, Tyr-69, and 83 to 84 contribute to the NAD(+) site; that span reads GA. Substrate is bound by residues Gln-86 and Arg-92. NAD(+) is bound by residues Thr-105, 122–124, and Ser-147; that span reads AAN. 124–127 contributes to the substrate binding site; it reads NPVD. Position 152–155 (152–155) interacts with substrate; that stretch reads DSAR. His-179 serves as the catalytic Proton acceptor. Tyr-223 is modified (phosphotyrosine). A substrate-binding site is contributed by Thr-232.

Belongs to the LDH/MDH superfamily. LDH family. As to quaternary structure, homotetramer.

The protein localises to the cytoplasm. It catalyses the reaction (S)-lactate + NAD(+) = pyruvate + NADH + H(+). The protein operates within fermentation; pyruvate fermentation to lactate; (S)-lactate from pyruvate: step 1/1. Functionally, catalyzes the conversion of lactate to pyruvate. The chain is L-lactate dehydrogenase from Pediococcus pentosaceus (strain ATCC 25745 / CCUG 21536 / LMG 10740 / 183-1w).